Consider the following 555-residue polypeptide: Dihydroxy-acid dehydratase (555 aa).

Aspartate 78 provides a ligand contact to Mg(2+). Cysteine 119 lines the [2Fe-2S] cluster pocket. Residues aspartate 120 and lysine 121 each coordinate Mg(2+). Lysine 121 carries the post-translational modification N6-carboxylysine. Residue cysteine 195 coordinates [2Fe-2S] cluster. Glutamate 444 serves as a coordination point for Mg(2+). Serine 470 serves as the catalytic Proton acceptor.

It belongs to the IlvD/Edd family. Homodimer. [2Fe-2S] cluster serves as cofactor. The cofactor is Mg(2+).

It carries out the reaction (2R)-2,3-dihydroxy-3-methylbutanoate = 3-methyl-2-oxobutanoate + H2O. The enzyme catalyses (2R,3R)-2,3-dihydroxy-3-methylpentanoate = (S)-3-methyl-2-oxopentanoate + H2O. It participates in amino-acid biosynthesis; L-isoleucine biosynthesis; L-isoleucine from 2-oxobutanoate: step 3/4. Its pathway is amino-acid biosynthesis; L-valine biosynthesis; L-valine from pyruvate: step 3/4. Functionally, functions in the biosynthesis of branched-chain amino acids. Catalyzes the dehydration of (2R,3R)-2,3-dihydroxy-3-methylpentanoate (2,3-dihydroxy-3-methylvalerate) into 2-oxo-3-methylpentanoate (2-oxo-3-methylvalerate) and of (2R)-2,3-dihydroxy-3-methylbutanoate (2,3-dihydroxyisovalerate) into 2-oxo-3-methylbutanoate (2-oxoisovalerate), the penultimate precursor to L-isoleucine and L-valine, respectively. This chain is Dihydroxy-acid dehydratase, found in Dehalococcoides mccartyi (strain CBDB1).